The chain runs to 295 residues: UDP-N-acetylenolpyruvoylglucosamine reductase (295 aa).

The 165-residue stretch at 24–188 (KVGGNAEIFF…LKAIFKANKG (165 aa)) folds into the FAD-binding PCMH-type domain. Residue R168 is part of the active site. S217 (proton donor) is an active-site residue. The active site involves E287.

Belongs to the MurB family. FAD serves as cofactor.

It localises to the cytoplasm. It catalyses the reaction UDP-N-acetyl-alpha-D-muramate + NADP(+) = UDP-N-acetyl-3-O-(1-carboxyvinyl)-alpha-D-glucosamine + NADPH + H(+). The protein operates within cell wall biogenesis; peptidoglycan biosynthesis. Cell wall formation. The protein is UDP-N-acetylenolpyruvoylglucosamine reductase of Rickettsia typhi (strain ATCC VR-144 / Wilmington).